The chain runs to 637 residues: DNA mismatch repair protein MutL (637 aa).

The segment covering 353-371 has biased composition (polar residues); sequence GQGQRPVSSASMPSASRQA. The segment at 353 to 444 is disordered; that stretch reads GQGQRPVSSA…SEAASETPHD (92 aa). Positions 378–389 are enriched in basic and acidic residues; sequence DWIKEGVQDWDW. A compositionally biased stretch (pro residues) spans 396-406; it reads PQNPPQNPPPG. The span at 430–444 shows a compositional bias: basic and acidic residues; the sequence is SGKELSEAASETPHD.

The protein belongs to the DNA mismatch repair MutL/HexB family.

Its function is as follows. This protein is involved in the repair of mismatches in DNA. It is required for dam-dependent methyl-directed DNA mismatch repair. May act as a 'molecular matchmaker', a protein that promotes the formation of a stable complex between two or more DNA-binding proteins in an ATP-dependent manner without itself being part of a final effector complex. This is DNA mismatch repair protein MutL from Beijerinckia indica subsp. indica (strain ATCC 9039 / DSM 1715 / NCIMB 8712).